Here is a 239-residue protein sequence, read N- to C-terminus: LexA repressor (239 aa).

Residues 27–47 constitute a DNA-binding region (H-T-H motif); the sequence is FDEMKDALDLASKSGIHRLIT. Active-site for autocatalytic cleavage activity residues include serine 159 and lysine 197.

This sequence belongs to the peptidase S24 family. Homodimer.

It catalyses the reaction Hydrolysis of Ala-|-Gly bond in repressor LexA.. Functionally, represses a number of genes involved in the response to DNA damage (SOS response), including recA and lexA. In the presence of single-stranded DNA, RecA interacts with LexA causing an autocatalytic cleavage which disrupts the DNA-binding part of LexA, leading to derepression of the SOS regulon and eventually DNA repair. In Rhizobium radiobacter (Agrobacterium tumefaciens), this protein is LexA repressor.